The primary structure comprises 1171 residues: WD repeat-containing protein on Y chromosome (1171 aa).

WD repeat units follow at residues 157–201, 331–370, 374–413, 464–503, 516–555, 603–643, 748–787, and 831–870; these read EIPE…LRSA, RIPL…EPSA, GHNG…LLQT, THAA…RKII, IIDI…VVRN, FHTD…RRYN, KVGD…IPQA, and GHLK…LGTL. The disordered stretch occupies residues 1076-1171; the sequence is RTSFTLSDYT…TNTMKSSNSH (96 aa). Composition is skewed to polar residues over residues 1094–1106 and 1161–1171; these read SSRN…SSGS and KTNTMKSSNSH.

This is WD repeat-containing protein on Y chromosome from Drosophila grimshawi (Hawaiian fruit fly).